We begin with the raw amino-acid sequence, 115 residues long: Large ribosomal subunit protein bL20 (115 aa).

It belongs to the bacterial ribosomal protein bL20 family.

Binds directly to 23S ribosomal RNA and is necessary for the in vitro assembly process of the 50S ribosomal subunit. It is not involved in the protein synthesizing functions of that subunit. The chain is Large ribosomal subunit protein bL20 from Borrelia hermsii (strain HS1 / DAH).